Here is a 223-residue protein sequence, read N- to C-terminus: MSLYATQDEKKQAAAKAALKHLPKGGILGVGTGSTVNFLIDLLPELQLEAAVASSQATADRLKKLGIEVVDMNHVVSLDAYVDGADEIDRHMHMIKGGGAALTREKIVASIAKKFVCIVDDSKWVDQLGRDFPLPVEVIPMARSAVARKLVSLGGDPVYREGVVTDNGNVILDVFNLNILNAIDLEKTINNIPGVVTNGIFALNPATIAIVATNDGIEERTAQ.

Substrate-binding positions include 32 to 35 (TGST), 83 to 86 (DGAD), and 96 to 99 (KGGG). E105 (proton acceptor) is an active-site residue. K123 contributes to the substrate binding site.

The protein belongs to the ribose 5-phosphate isomerase family. As to quaternary structure, homodimer.

The enzyme catalyses aldehydo-D-ribose 5-phosphate = D-ribulose 5-phosphate. It participates in carbohydrate degradation; pentose phosphate pathway; D-ribose 5-phosphate from D-ribulose 5-phosphate (non-oxidative stage): step 1/1. Its function is as follows. Catalyzes the reversible conversion of ribose-5-phosphate to ribulose 5-phosphate. This chain is Ribose-5-phosphate isomerase A, found in Acinetobacter baumannii (strain SDF).